Consider the following 1030-residue polypeptide: Carbamoyl phosphate synthase arginine-specific large chain (1030 aa).

The interval 1–401 is carboxyphosphate synthetic domain; it reads MPKDTSISSI…AIQKAAASLE (401 aa). 12 residues coordinate ATP: Arg-129, Arg-169, Gly-175, Gly-176, Lys-208, Ile-210, Glu-215, Gly-241, Val-242, His-243, Gln-284, and Glu-298. Residues 133 to 327 form the ATP-grasp 1 domain; it reads RSLMNELKQP…IAKMAAKLAV (195 aa). Mg(2+) is bound by residues Gln-284, Glu-298, and Asn-300. The Mn(2+) site is built by Gln-284, Glu-298, and Asn-300. The tract at residues 402–548 is oligomerization domain; that stretch reads LKNIGTHLPE…YSTYFGETDG (147 aa). The interval 549–928 is carbamoyl phosphate synthetic domain; that stretch reads DISRKEKKRA…ALKKIYTRVW (380 aa). An ATP-grasp 2 domain is found at 675–863; the sequence is YQLLDELGLK…MIPLATRLLA (189 aa). 10 residues coordinate ATP: Arg-711, Gln-748, Val-750, Glu-754, Gly-779, Val-780, His-781, Ser-782, Gln-822, and Glu-834. Mg(2+) is bound by residues Gln-822, Glu-834, and Asn-836. 3 residues coordinate Mn(2+): Gln-822, Glu-834, and Asn-836. The MGS-like domain occupies 925 to 1027; sequence TRVWSQKGSI…KDLYKKEVAS (103 aa). Residues 929–1030 are allosteric domain; that stretch reads SQKGSIYLQN…YKKEVASCTQ (102 aa).

Belongs to the CarB family. In terms of assembly, composed of two chains; the small (or glutamine) chain promotes the hydrolysis of glutamine to ammonia, which is used by the large (or ammonia) chain to synthesize carbamoyl phosphate. Tetramer of heterodimers (alpha,beta)4. Requires Mg(2+) as cofactor. Mn(2+) serves as cofactor.

It catalyses the reaction hydrogencarbonate + L-glutamine + 2 ATP + H2O = carbamoyl phosphate + L-glutamate + 2 ADP + phosphate + 2 H(+). It carries out the reaction hydrogencarbonate + NH4(+) + 2 ATP = carbamoyl phosphate + 2 ADP + phosphate + 2 H(+). Its pathway is amino-acid biosynthesis; L-arginine biosynthesis; carbamoyl phosphate from bicarbonate: step 1/1. Its function is as follows. Large subunit of the glutamine-dependent carbamoyl phosphate synthetase (CPSase). CPSase catalyzes the formation of carbamoyl phosphate from the ammonia moiety of glutamine, carbonate, and phosphate donated by ATP, constituting the first step of the biosynthetic pathway leading to arginine and/or urea. The large subunit (synthetase) binds the substrates ammonia (free or transferred from glutamine from the small subunit), hydrogencarbonate and ATP and carries out an ATP-coupled ligase reaction, activating hydrogencarbonate by forming carboxy phosphate which reacts with ammonia to form carbamoyl phosphate. The sequence is that of Carbamoyl phosphate synthase arginine-specific large chain from Bacillus subtilis (strain 168).